Here is a 432-residue protein sequence, read N- to C-terminus: MRVLVLGSGVIGTTTAYYLARAGFEVVVVDRAEAPAMETSFANAGQVSPGYASPWAAPGVPLKALKWLFERHAPLAIRPTADWRQYLWLAQMLRNCTAGRYALNKERMVRLSEYSRDCLDELRAETGIDYEGRQLGTTQLFRTQRQLDAAGKDIAVLARSGVPYELLDRAGIARVEPALAGVADRLAGALRLPNDQTGDCHLFTTRLAELAAGLGVEFRFGQSVERLERDGERIVGVRIDGRLESADLYVLALGSYSPRLLAPLGIRAPIYPLKGYSLTIPIVDPAMAPTSTILDETYKVAITRFETRIRVGGMAELAGFDLSLNPRRRETLELVVGDLYPRGGDLARAEFWTGLRPATPDGTPIVGATRYRNLFLNTGHGTLGWTMACGSGRLLADLMARTRPQISAAGLDISRYGNSQENSTHVHPAPAN.

3–17 is a binding site for FAD; the sequence is VLVLGSGVIGTTTAY.

Belongs to the DadA oxidoreductase family. FAD is required as a cofactor.

The catalysed reaction is a D-alpha-amino acid + A + H2O = a 2-oxocarboxylate + AH2 + NH4(+). It participates in amino-acid degradation; D-alanine degradation; NH(3) and pyruvate from D-alanine: step 1/1. Functionally, oxidative deamination of D-amino acids. This chain is D-amino acid dehydrogenase, found in Azotobacter vinelandii (strain DJ / ATCC BAA-1303).